Here is a 273-residue protein sequence, read N- to C-terminus: Octanoyltransferase LipM (273 aa).

The 212-residue stretch at 33-244 (GKTPPTLRFY…AFTRLYAVEF (212 aa)) folds into the BPL/LPL catalytic domain. Cysteine 146 (acyl-thioester intermediate) is an active-site residue.

The protein belongs to the octanoyltransferase LipM family. In terms of assembly, monomer.

It carries out the reaction octanoyl-[ACP] + L-lysyl-[protein] = N(6)-octanoyl-L-lysyl-[protein] + holo-[ACP] + H(+). It functions in the pathway protein modification; protein lipoylation via endogenous pathway; protein N(6)-(lipoyl)lysine from octanoyl-[acyl-carrier-protein]. In terms of biological role, catalyzes the transfer of endogenously produced octanoic acid from octanoyl-acyl-carrier-protein onto the lipoyl domain of GcvH, an intermediate carrier during protein lipoylation. The chain is Octanoyltransferase LipM from Moorella thermoacetica (strain ATCC 39073 / JCM 9320).